We begin with the raw amino-acid sequence, 353 residues long: Fe(3+) ions import ATP-binding protein FbpC (353 aa).

Residues 9–239 (VTFENVTKKF…PASAFIADFM (231 aa)) enclose the ABC transporter domain. An ATP-binding site is contributed by 41 to 48 (GPSGCGKT).

This sequence belongs to the ABC transporter superfamily. Fe(3+) ion importer (TC 3.A.1.10) family. The complex is composed of two ATP-binding proteins (FbpC), two transmembrane proteins (FbpB) and a solute-binding protein (FbpA).

It is found in the cell inner membrane. It catalyses the reaction Fe(3+)(out) + ATP + H2O = Fe(3+)(in) + ADP + phosphate + H(+). Part of the ABC transporter complex FbpABC involved in Fe(3+) ions import. Responsible for energy coupling to the transport system. The chain is Fe(3+) ions import ATP-binding protein FbpC from Brucella abortus (strain 2308).